Here is a 776-residue protein sequence, read N- to C-terminus: Protein translocase subunit SecA 2 (776 aa).

ATP-binding positions include glutamine 80, glycine 98–threonine 102, and aspartate 486.

It belongs to the SecA family. Monomer and homodimer. Part of the essential Sec protein translocation apparatus which comprises SecA, SecYEG and auxiliary proteins SecDF. Other proteins may also be involved.

It localises to the cell membrane. The protein resides in the cytoplasm. The catalysed reaction is ATP + H2O + cellular proteinSide 1 = ADP + phosphate + cellular proteinSide 2.. Part of the Sec protein translocase complex. Interacts with the SecYEG preprotein conducting channel. Has a central role in coupling the hydrolysis of ATP to the transfer of proteins into and across the cell membrane, serving as an ATP-driven molecular motor driving the stepwise translocation of polypeptide chains across the membrane. The chain is Protein translocase subunit SecA 2 from Listeria monocytogenes serotype 1/2a (strain 10403S).